A 430-amino-acid polypeptide reads, in one-letter code: Histidinol dehydrogenase (430 aa).

Residues Tyr130, Gln191, and Asn214 each contribute to the NAD(+) site. Substrate contacts are provided by Ser237, Gln259, and His262. Positions 259 and 262 each coordinate Zn(2+). Residues Glu327 and His328 each act as proton acceptor in the active site. Substrate contacts are provided by His328, Asp361, Glu415, and His420. Residue Asp361 coordinates Zn(2+). A Zn(2+)-binding site is contributed by His420.

The protein belongs to the histidinol dehydrogenase family. It depends on Zn(2+) as a cofactor.

The catalysed reaction is L-histidinol + 2 NAD(+) + H2O = L-histidine + 2 NADH + 3 H(+). The protein operates within amino-acid biosynthesis; L-histidine biosynthesis; L-histidine from 5-phospho-alpha-D-ribose 1-diphosphate: step 9/9. Functionally, catalyzes the sequential NAD-dependent oxidations of L-histidinol to L-histidinaldehyde and then to L-histidine. The sequence is that of Histidinol dehydrogenase from Brucella suis biovar 1 (strain 1330).